A 443-amino-acid polypeptide reads, in one-letter code: Probable glycine dehydrogenase (decarboxylating) subunit 1 (443 aa).

Belongs to the GcvP family. N-terminal subunit subfamily. In terms of assembly, the glycine cleavage system is composed of four proteins: P, T, L and H. In this organism, the P 'protein' is a heterodimer of two subunits.

The catalysed reaction is N(6)-[(R)-lipoyl]-L-lysyl-[glycine-cleavage complex H protein] + glycine + H(+) = N(6)-[(R)-S(8)-aminomethyldihydrolipoyl]-L-lysyl-[glycine-cleavage complex H protein] + CO2. In terms of biological role, the glycine cleavage system catalyzes the degradation of glycine. The P protein binds the alpha-amino group of glycine through its pyridoxal phosphate cofactor; CO(2) is released and the remaining methylamine moiety is then transferred to the lipoamide cofactor of the H protein. The polypeptide is Probable glycine dehydrogenase (decarboxylating) subunit 1 (Oleidesulfovibrio alaskensis (strain ATCC BAA-1058 / DSM 17464 / G20) (Desulfovibrio alaskensis)).